The chain runs to 677 residues: DNA ligase (677 aa).

NAD(+) is bound by residues 32-36 (DAQYD), 81-82 (SL), and Glu112. The active-site N6-AMP-lysine intermediate is Lys114. 4 residues coordinate NAD(+): Arg135, Glu171, Lys288, and Lys312. The Zn(2+) site is built by Cys416, Cys419, Cys434, and Cys439. The BRCT domain maps to 598–677 (NKNMPFSGME…REFINMLEQS (80 aa)).

This sequence belongs to the NAD-dependent DNA ligase family. LigA subfamily. Requires Mg(2+) as cofactor. It depends on Mn(2+) as a cofactor.

The catalysed reaction is NAD(+) + (deoxyribonucleotide)n-3'-hydroxyl + 5'-phospho-(deoxyribonucleotide)m = (deoxyribonucleotide)n+m + AMP + beta-nicotinamide D-nucleotide.. Functionally, DNA ligase that catalyzes the formation of phosphodiester linkages between 5'-phosphoryl and 3'-hydroxyl groups in double-stranded DNA using NAD as a coenzyme and as the energy source for the reaction. It is essential for DNA replication and repair of damaged DNA. In Dehalococcoides mccartyi (strain CBDB1), this protein is DNA ligase.